A 262-amino-acid chain; its full sequence is Sepiapterin reductase (262 aa).

At M1 the chain carries N-acetylmethionine. 15 to 21 (GASRGFG) serves as a coordination point for NADP(+). S33 is modified (phosphoserine). 43-44 (RS) contributes to the NADP(+) binding site. S46 carries the phosphoserine; by CaMK2; in vitro modification. NADP(+) is bound at residue 70 to 71 (DL). Substrate contacts are provided by residues 158 to 159 (SL) and Y171. K175 is a binding site for NADP(+). Phosphoserine; by CaMK2; in vitro is present on S196. G200 contributes to the substrate binding site. 202–207 (LDTNMQ) is an NADP(+) binding site. S214 carries the phosphoserine; by CaMK2; in vitro modification. D258 lines the substrate pocket.

This sequence belongs to the sepiapterin reductase family. In terms of assembly, homodimer. Post-translationally, in vitro phosphorylation of Ser-46, Ser-196 and Ser-214 by CaMK2 does not change kinetic parameters.

It localises to the cytoplasm. It carries out the reaction L-erythro-7,8-dihydrobiopterin + NADP(+) = L-sepiapterin + NADPH + H(+). It catalyses the reaction (6R)-L-erythro-5,6,7,8-tetrahydrobiopterin + 2 NADP(+) = 6-pyruvoyl-5,6,7,8-tetrahydropterin + 2 NADPH + 2 H(+). Catalyzes the final one or two reductions in tetra-hydrobiopterin biosynthesis to form 5,6,7,8-tetrahydrobiopterin. The polypeptide is Sepiapterin reductase (Spr) (Rattus norvegicus (Rat)).